Consider the following 217-residue polypeptide: Octanoyltransferase (217 aa).

One can recognise a BPL/LPL catalytic domain in the interval 32–207 (SESHDELWIV…TFSQLLGYQH (176 aa)). Substrate-binding positions include 71–78 (RGGQVTYH), 138–140 (SLG), and 151–153 (GLA). Cys-169 (acyl-thioester intermediate) is an active-site residue.

This sequence belongs to the LipB family.

It is found in the cytoplasm. It carries out the reaction octanoyl-[ACP] + L-lysyl-[protein] = N(6)-octanoyl-L-lysyl-[protein] + holo-[ACP] + H(+). The protein operates within protein modification; protein lipoylation via endogenous pathway; protein N(6)-(lipoyl)lysine from octanoyl-[acyl-carrier-protein]: step 1/2. Functionally, catalyzes the transfer of endogenously produced octanoic acid from octanoyl-acyl-carrier-protein onto the lipoyl domains of lipoate-dependent enzymes. Lipoyl-ACP can also act as a substrate although octanoyl-ACP is likely to be the physiological substrate. This chain is Octanoyltransferase, found in Shewanella baltica (strain OS223).